The primary structure comprises 217 residues: Homeobox protein Hox-B7 (217 aa).

The short motif at 126–131 is the Antp-type hexapeptide element; that stretch reads IYPWMR. The segment at residues 137 to 196 is a DNA-binding region (homeobox); sequence RKRGRQTYTRYQTLELEKEFHYNRYLTRRRRIEIAHTLCLTERQIKIWFQNRRMKWKKEN. The disordered stretch occupies residues 194 to 217; it reads KENKTAGPGTTGQDRAEAEEEEEE.

This sequence belongs to the Antp homeobox family. In terms of assembly, forms a DNA-binding heterodimer with transcription factor PBX1.

The protein resides in the nucleus. Its function is as follows. Sequence-specific transcription factor which is part of a developmental regulatory system that provides cells with specific positional identities on the anterior-posterior axis. This is Homeobox protein Hox-B7 (HOXB7) from Homo sapiens (Human).